The sequence spans 398 residues: Succinate--CoA ligase [ADP-forming] subunit beta (398 aa).

The region spanning Lys-9 to Glu-254 is the ATP-grasp domain. ATP-binding positions include Lys-46, Gly-53–Gly-55, Glu-109, Ala-112, and Glu-117. Asn-209 and Asp-223 together coordinate Mg(2+). Substrate is bound by residues Asn-274 and Gly-331–Met-333.

The protein belongs to the succinate/malate CoA ligase beta subunit family. Heterotetramer of two alpha and two beta subunits. Mg(2+) is required as a cofactor.

The enzyme catalyses succinate + ATP + CoA = succinyl-CoA + ADP + phosphate. It catalyses the reaction GTP + succinate + CoA = succinyl-CoA + GDP + phosphate. It functions in the pathway carbohydrate metabolism; tricarboxylic acid cycle; succinate from succinyl-CoA (ligase route): step 1/1. Functionally, succinyl-CoA synthetase functions in the citric acid cycle (TCA), coupling the hydrolysis of succinyl-CoA to the synthesis of either ATP or GTP and thus represents the only step of substrate-level phosphorylation in the TCA. The beta subunit provides nucleotide specificity of the enzyme and binds the substrate succinate, while the binding sites for coenzyme A and phosphate are found in the alpha subunit. The polypeptide is Succinate--CoA ligase [ADP-forming] subunit beta (Brucella anthropi (strain ATCC 49188 / DSM 6882 / CCUG 24695 / JCM 21032 / LMG 3331 / NBRC 15819 / NCTC 12168 / Alc 37) (Ochrobactrum anthropi)).